Here is a 280-residue protein sequence, read N- to C-terminus: Tryptophan synthase alpha chain (280 aa).

Residues Glu-49 and Asp-60 each act as proton acceptor in the active site.

It belongs to the TrpA family. In terms of assembly, tetramer of two alpha and two beta chains.

It catalyses the reaction (1S,2R)-1-C-(indol-3-yl)glycerol 3-phosphate + L-serine = D-glyceraldehyde 3-phosphate + L-tryptophan + H2O. It functions in the pathway amino-acid biosynthesis; L-tryptophan biosynthesis; L-tryptophan from chorismate: step 5/5. The alpha subunit is responsible for the aldol cleavage of indoleglycerol phosphate to indole and glyceraldehyde 3-phosphate. The chain is Tryptophan synthase alpha chain from Corynebacterium efficiens (strain DSM 44549 / YS-314 / AJ 12310 / JCM 11189 / NBRC 100395).